We begin with the raw amino-acid sequence, 461 residues long: tRNA modification GTPase MnmE (461 aa).

(6S)-5-formyl-5,6,7,8-tetrahydrofolate-binding residues include arginine 27, glutamate 89, and arginine 128. Positions 224 to 382 (GLATAIVGQP…LEELINKLFF (159 aa)) constitute a TrmE-type G domain. Asparagine 234 is a K(+) binding site. Residues 234-239 (NVGKSS), 253-259 (TDVAGTT), and 278-281 (DTAG) each bind GTP. Serine 238 contacts Mg(2+). 3 residues coordinate K(+): threonine 253, valine 255, and threonine 258. Mg(2+) is bound at residue threonine 259. A (6S)-5-formyl-5,6,7,8-tetrahydrofolate-binding site is contributed by lysine 461.

The protein belongs to the TRAFAC class TrmE-Era-EngA-EngB-Septin-like GTPase superfamily. TrmE GTPase family. In terms of assembly, homodimer. Heterotetramer of two MnmE and two MnmG subunits. K(+) serves as cofactor.

The protein localises to the cytoplasm. Functionally, exhibits a very high intrinsic GTPase hydrolysis rate. Involved in the addition of a carboxymethylaminomethyl (cmnm) group at the wobble position (U34) of certain tRNAs, forming tRNA-cmnm(5)s(2)U34. This is tRNA modification GTPase MnmE from Lactobacillus acidophilus (strain ATCC 700396 / NCK56 / N2 / NCFM).